Here is a 227-residue protein sequence, read N- to C-terminus: ATP-dependent dethiobiotin synthetase BioD (227 aa).

13 to 18 lines the ATP pocket; that stretch reads DAGKTT. Residue T17 participates in Mg(2+) binding. The active site involves K38. Residues D55, 118–121, 178–179, 207–209, and E214 contribute to the ATP site; these read EGAG, NR, and PYI. Mg(2+) is bound by residues D55 and E118.

Belongs to the dethiobiotin synthetase family. In terms of assembly, homodimer. Mg(2+) serves as cofactor.

The protein localises to the cytoplasm. It catalyses the reaction (7R,8S)-7,8-diammoniononanoate + CO2 + ATP = (4R,5S)-dethiobiotin + ADP + phosphate + 3 H(+). The protein operates within cofactor biosynthesis; biotin biosynthesis; biotin from 7,8-diaminononanoate: step 1/2. Catalyzes a mechanistically unusual reaction, the ATP-dependent insertion of CO2 between the N7 and N8 nitrogen atoms of 7,8-diaminopelargonic acid (DAPA, also called 7,8-diammoniononanoate) to form a ureido ring. The sequence is that of ATP-dependent dethiobiotin synthetase BioD from Tolumonas auensis (strain DSM 9187 / NBRC 110442 / TA 4).